The following is a 208-amino-acid chain: Small ribosomal subunit protein uS4 (208 aa).

An S4 RNA-binding domain is found at 98 to 160; that stretch reads QRLDNVVYRM…SKNNSQIVRA (63 aa).

It belongs to the universal ribosomal protein uS4 family. Part of the 30S ribosomal subunit. Contacts protein S5. The interaction surface between S4 and S5 is involved in control of translational fidelity.

Its function is as follows. One of the primary rRNA binding proteins, it binds directly to 16S rRNA where it nucleates assembly of the body of the 30S subunit. Functionally, with S5 and S12 plays an important role in translational accuracy. This Sulfurimonas denitrificans (strain ATCC 33889 / DSM 1251) (Thiomicrospira denitrificans (strain ATCC 33889 / DSM 1251)) protein is Small ribosomal subunit protein uS4.